Reading from the N-terminus, the 542-residue chain is GPI alpha-1,2-mannosyltransferase 3 (542 aa).

A disordered region spans residues 1–36; the sequence is MESQAADYNPASRNLHGSSGEMKLRRRKSRQYVSAQ. 8 consecutive transmembrane segments (helical) span residues 52-72, 125-145, 213-233, 244-264, 304-324, 327-347, 351-371, and 376-396; these read LVLF…TSFV, VQFL…VADI, LVAL…PLLF, HLTL…SLII, GFPV…FLAP, LHIL…LGHK, FIYP…AHLK, and AALS…GLVH. Asn-480 carries N-linked (GlcNAc...) asparagine glycosylation.

This sequence belongs to the glycosyltransferase 22 family. PIGB subfamily.

Its subcellular location is the endoplasmic reticulum membrane. The protein operates within glycolipid biosynthesis; glycosylphosphatidylinositol-anchor biosynthesis. Alpha-1,2-mannosyltransferase that catalyzes the transfer of the third mannose, via an alpha-1,2 bond, from a dolichol-phosphate-mannose (Dol-P-Man) to an alpha-D-Man-(1-&gt;6)-2-PEtn-alpha-D-Man-(1-&gt;4)-alpha-D-GlcN-(1-&gt;6)-(1-radyl,2-acyl-sn-glycero-3-phospho)-2-acyl-inositol intermediate to generate an alpha-D-Man-(1-&gt;2)-alpha-D-Man-(1-&gt;6)-2-PEtn-alpha-D-Man-(1-&gt;4)-alpha-D-GlcN-(1-&gt;6)-(1-radyl,2-acyl-sn-glycero-3-phospho)-2-acyl-inositol (also termed H6) and participates in the nineth step of the glycosylphosphatidylinositol-anchor biosynthesis. May also add the third mannose to an alpha-D-Man-(1-&gt;6)-alpha-D-Man-(1-&gt;4)-alpha-D-GlcN-(1-&gt;6)-(1-radyl,2-acyl-sn-glycero-3-phospho)-2-acyl-inositol (also termed H3) intermediate generating an alpha-D-Man-(1-&gt;2)-alpha-D-Man-(1-&gt;6)-alpha-D-Man-(1-&gt;4)-alpha-D-GlcN-(1-&gt;6)-(1-radyl,2-acyl-sn-glycero-3-phospho)-2-acyl-inositol (also termed H4). The protein is GPI alpha-1,2-mannosyltransferase 3 of Mus musculus (Mouse).